We begin with the raw amino-acid sequence, 434 residues long: Nicotinate phosphoribosyltransferase (434 aa).

His242 is modified (phosphohistidine; by autocatalysis).

It belongs to the NAPRTase family. In terms of processing, transiently phosphorylated on a His residue during the reaction cycle. Phosphorylation strongly increases the affinity for substrates and increases the rate of nicotinate D-ribonucleotide production. Dephosphorylation regenerates the low-affinity form of the enzyme, leading to product release.

The enzyme catalyses nicotinate + 5-phospho-alpha-D-ribose 1-diphosphate + ATP + H2O = nicotinate beta-D-ribonucleotide + ADP + phosphate + diphosphate. The protein operates within cofactor biosynthesis; NAD(+) biosynthesis; nicotinate D-ribonucleotide from nicotinate: step 1/1. Functionally, catalyzes the synthesis of beta-nicotinate D-ribonucleotide from nicotinate and 5-phospho-D-ribose 1-phosphate at the expense of ATP. In Brucella melitensis biotype 1 (strain ATCC 23456 / CCUG 17765 / NCTC 10094 / 16M), this protein is Nicotinate phosphoribosyltransferase.